The chain runs to 327 residues: Ventral anterior homeobox 1 (327 aa).

Basic and acidic residues predominate over residues 1–34 (MFGKQDKMDVRCSTETEANRVSKNGHKEGKDSKG). The disordered stretch occupies residues 1 to 41 (MFGKQDKMDVRCSTETEANRVSKNGHKEGKDSKGAEGNIST). A DNA-binding region (homeobox) is located at residues 99–158 (PKRTRTSFTAEQLYRLEMEFQRCQYVVGRERTELARQLNLSETQVKVWFQNRRTKQKKDQ). Over residues 230–245 (APAGGSPHPPSAGTAA) the composition is skewed to low complexity. The tract at residues 230-249 (APAGGSPHPPSAGTAAGPPP) is disordered.

It belongs to the EMX homeobox family.

Its subcellular location is the nucleus. Functionally, transcription factor that plays a role in establishing dorsal-ventral polarity in the neural retina. The chain is Ventral anterior homeobox 1 (VAX1) from Gallus gallus (Chicken).